Here is a 339-residue protein sequence, read N- to C-terminus: Methylthioribose-1-phosphate isomerase (339 aa).

Substrate contacts are provided by residues Arg49–Ala51, Arg86, and Gln187. Residue Asp228 is the Proton donor of the active site. Substrate is bound at residue Asn238–Lys239.

Belongs to the eIF-2B alpha/beta/delta subunits family. MtnA subfamily.

It carries out the reaction 5-(methylsulfanyl)-alpha-D-ribose 1-phosphate = 5-(methylsulfanyl)-D-ribulose 1-phosphate. It functions in the pathway amino-acid biosynthesis; L-methionine biosynthesis via salvage pathway; L-methionine from S-methyl-5-thio-alpha-D-ribose 1-phosphate: step 1/6. Its function is as follows. Catalyzes the interconversion of methylthioribose-1-phosphate (MTR-1-P) into methylthioribulose-1-phosphate (MTRu-1-P). This Cronobacter sakazakii (strain ATCC BAA-894) (Enterobacter sakazakii) protein is Methylthioribose-1-phosphate isomerase.